Consider the following 295-residue polypeptide: SPX domain-containing protein 1 (295 aa).

The SPX domain occupies Met1–Gln166. Positions Asn197–Gly227 are disordered. Over residues Glu204–Pro216 the composition is skewed to basic and acidic residues.

As to quaternary structure, interacts (via SPX domain) with PHR2 (via C-terminus). Interacts with RLI1 in the nucleus to prevents its positive regulation of leaf inclination during phosphate (Pi) starvation.

It is found in the nucleus. In terms of biological role, involved in plant adaptation to phosphate (Pi) starvation. Inhibits PHR2 DNA-binding activity via a Pi-dependent protein interaction. Suppresses the regulation on expression of PT2 by PHR2 and accumulation of shoot Pi. Optimizes growth under phosphate-limited conditions through a negative feedback loop of the PSI (phosphate starvation-induced) signaling pathway. Regulates the expression of SPX2, SPX3 and SPX5. May be an important link between signal transduction pathways related to phosphate starvation and cold stress. Together with SPX2, plays a negative role in the regulation of leaf inclination by preventing RLI1 transcription factor activity in Pi depleted conditions. This is SPX domain-containing protein 1 from Oryza sativa subsp. indica (Rice).